The chain runs to 640 residues: PAN2-PAN3 deadenylation complex subunit PAN3 (640 aa).

Residues 17–46 (ENKDILCRNVLIYGHCRYEDQGCTYNHDQN) form a C3H1-type zinc finger. Composition is skewed to polar residues over residues 43–53 (HDQNKNSSQPE) and 63–87 (DSPS…SQAA). The segment at 43 to 101 (HDQNKNSSQPEAPSKKMFNVDSPSFTPSGQSTVLPKKTTLSSQAASAAPFTPRGGGTPT) is disordered. The tract at residues 237–498 (QVIPNSGLPQ…TIEHFMTGIA (262 aa)) is pseudokinase domain. Residues asparagine 263, arginine 288, 338–345 (DFHPLSKT), and 397–398 (SK) contribute to the ATP site. A coiled-coil region spans residues 499–537 (SQMTTFFDLALQDNDEKLFHLAREVENGRIARSLMKLLT). Residues 538 to 640 (ILERGDYDGV…SKTGAPGANT (103 aa)) are knob domain.

This sequence belongs to the protein kinase superfamily. PAN3 family. In terms of assembly, homodimer. Forms a heterotrimer with a catalytic subunit PAN2 to form the poly(A)-nuclease (PAN) deadenylation complex. Interacts (via PAM-2 motif) with poly(A)-binding protein PAB1 (via PABC domain), conferring substrate specificity of the enzyme complex.

It localises to the cytoplasm. Its function is as follows. Regulatory subunit of the poly(A)-nuclease (PAN) deadenylation complex, one of two cytoplasmic mRNA deadenylases involved in mRNA turnover. PAN specifically shortens poly(A) tails of RNA and the activity is stimulated by poly(A)-binding protein PAB1. PAN deadenylation is followed by rapid degradation of the shortened mRNA tails by the CCR4-NOT complex. Deadenylated mRNAs are then degraded by two alternative mechanisms, namely exosome-mediated 3'-5' exonucleolytic degradation, or deadenylation-dependent mRNA decaping and subsequent 5'-3' exonucleolytic degradation by XRN1. May also be involved in post-transcriptional maturation of mRNA poly(A) tails. PAN3 acts as a positive regulator for PAN activity, recruiting the catalytic subunit PAN2 to mRNA via its interaction with RNA and with PAB1. The protein is PAN2-PAN3 deadenylation complex subunit PAN3 of Chaetomium thermophilum (strain DSM 1495 / CBS 144.50 / IMI 039719) (Thermochaetoides thermophila).